The chain runs to 387 residues: Succinyl-diaminopimelate desuccinylase (387 aa).

H75 contacts Zn(2+). D77 is a catalytic residue. Residue D108 participates in Zn(2+) binding. The active-site Proton acceptor is E139. Residues E140, E168, and H357 each contribute to the Zn(2+) site.

It belongs to the peptidase M20A family. DapE subfamily. Homodimer. It depends on Zn(2+) as a cofactor. Co(2+) is required as a cofactor.

The enzyme catalyses N-succinyl-(2S,6S)-2,6-diaminopimelate + H2O = (2S,6S)-2,6-diaminopimelate + succinate. The protein operates within amino-acid biosynthesis; L-lysine biosynthesis via DAP pathway; LL-2,6-diaminopimelate from (S)-tetrahydrodipicolinate (succinylase route): step 3/3. In terms of biological role, catalyzes the hydrolysis of N-succinyl-L,L-diaminopimelic acid (SDAP), forming succinate and LL-2,6-diaminopimelate (DAP), an intermediate involved in the bacterial biosynthesis of lysine and meso-diaminopimelic acid, an essential component of bacterial cell walls. In Caulobacter sp. (strain K31), this protein is Succinyl-diaminopimelate desuccinylase.